The sequence spans 241 residues: Small ribosomal subunit protein uS3 (241 aa).

A KH type-2 domain is found at 39–109 (VRNYVNKNLS…PIRINVVEVA (71 aa)). Residues 213–241 (ADEQPTNREPQQRRRQQQRRRQQFEDRSE) form a disordered region.

Belongs to the universal ribosomal protein uS3 family. As to quaternary structure, part of the 30S ribosomal subunit. Forms a tight complex with proteins S10 and S14.

In terms of biological role, binds the lower part of the 30S subunit head. Binds mRNA in the 70S ribosome, positioning it for translation. The chain is Small ribosomal subunit protein uS3 from Acaryochloris marina (strain MBIC 11017).